A 486-amino-acid polypeptide reads, in one-letter code: Glutamyl-tRNA(Gln) amidotransferase subunit A (486 aa).

Residues K78 and S153 each act as charge relay system in the active site. S177 serves as the catalytic Acyl-ester intermediate.

The protein belongs to the amidase family. GatA subfamily. As to quaternary structure, heterotrimer of A, B and C subunits.

It carries out the reaction L-glutamyl-tRNA(Gln) + L-glutamine + ATP + H2O = L-glutaminyl-tRNA(Gln) + L-glutamate + ADP + phosphate + H(+). Its function is as follows. Allows the formation of correctly charged Gln-tRNA(Gln) through the transamidation of misacylated Glu-tRNA(Gln) in organisms which lack glutaminyl-tRNA synthetase. The reaction takes place in the presence of glutamine and ATP through an activated gamma-phospho-Glu-tRNA(Gln). The sequence is that of Glutamyl-tRNA(Gln) amidotransferase subunit A from Syntrophobacter fumaroxidans (strain DSM 10017 / MPOB).